The primary structure comprises 429 residues: MPKNTKRKRLCPKMNQKLGLKDQDQEIFDLIEQEKARQKENILLIASENFVSQAVLDAQGSILTNKYAEGYPQARYYNGCKNVDQIEKIAIQRATKLFGAKYANVQPHSGSQANMGVFQALLKPGDKILGLSLMDGGHLTHGHKLSFSGGFYEAHFYNVNPQTEMLDYDEIRKVALAVKPKLIIAGYSAYSKTINFKKFRQIADEVNAYLIADIAHIAGLVACGLHPCPFEANADVVTSTMHKTLRGPRGGLILTNKEELFKKINRGIFPGIQGGPCIHTIAAKAVAFQEAMMPSFKEYQKQVIKNANTFAKAFQQKGYRIVSGSTDNHLFLIDVKHKNTEFTGAKIANMLEKINIVVNKNTIPFDQEKPFVTSGIRIGTPAMTTVGFRENDFVAVADLMDKAINHLDDESYLSQIKQQVLALLSKFNK.

(6S)-5,6,7,8-tetrahydrofolate-binding positions include Leu-133 and 137 to 139 (GHL). Lys-243 carries the N6-(pyridoxal phosphate)lysine modification. Glu-259 contributes to the (6S)-5,6,7,8-tetrahydrofolate binding site.

It belongs to the SHMT family. In terms of assembly, homodimer. Pyridoxal 5'-phosphate is required as a cofactor.

Its subcellular location is the cytoplasm. The catalysed reaction is (6R)-5,10-methylene-5,6,7,8-tetrahydrofolate + glycine + H2O = (6S)-5,6,7,8-tetrahydrofolate + L-serine. It functions in the pathway one-carbon metabolism; tetrahydrofolate interconversion. The protein operates within amino-acid biosynthesis; glycine biosynthesis; glycine from L-serine: step 1/1. In terms of biological role, catalyzes the reversible interconversion of serine and glycine with tetrahydrofolate (THF) serving as the one-carbon carrier. This reaction serves as the major source of one-carbon groups required for the biosynthesis of purines, thymidylate, methionine, and other important biomolecules. Also exhibits THF-independent aldolase activity toward beta-hydroxyamino acids, producing glycine and aldehydes, via a retro-aldol mechanism. The sequence is that of Serine hydroxymethyltransferase from Aster yellows witches'-broom phytoplasma (strain AYWB).